We begin with the raw amino-acid sequence, 402 residues long: MYDSEVIEYAKEQENIISKLEYRVYKHDDGRSVNRQDLMRDYARVLYSSSFRRLQGKMQLLGVDASKFNRNRLTHSLEVAQIARSIAYDLELNHTVVAETASLAHDIGNPPFGHYGEVVLNDLSLACGGYEGNAQAFRILRTLEKKHYAYPGLNLNVRTLMAITKYFFNKHQNNKKFLYDADYEFLKTELDSKGVTVTKSIDAEIMDLADEIAYAAHDLEDALSFGMISLGEIVHEFSISDKFKDAYPTMTDIAKEAQNVAMKASRSGTSEEYAIVLKKELTSMIVNILCSDIGLVDGCLGYKRHAKLAEGLKKLLFKAILRKKDIQLYERRGEQIIRGLFEVYSDEKYNKDNMLLPPELRAINDCKTRLVTDYISGMMDSYAAQEYEKYFGKGSADKLYFK.

In terms of domain architecture, HD spans 72 to 215; it reads RLTHSLEVAQ…MDLADEIAYA (144 aa).

This sequence belongs to the dGTPase family. Type 2 subfamily.

This chain is Deoxyguanosinetriphosphate triphosphohydrolase-like protein 2, found in Vibrio cholerae serotype O1 (strain ATCC 39315 / El Tor Inaba N16961).